The chain runs to 102 residues: UPF0235 protein Swol_0959 (102 aa).

This sequence belongs to the UPF0235 family.

This is UPF0235 protein Swol_0959 from Syntrophomonas wolfei subsp. wolfei (strain DSM 2245B / Goettingen).